Reading from the N-terminus, the 383-residue chain is ATP phosphoribosyltransferase regulatory subunit (383 aa).

Belongs to the class-II aminoacyl-tRNA synthetase family. HisZ subfamily. As to quaternary structure, heteromultimer composed of HisG and HisZ subunits.

It is found in the cytoplasm. It functions in the pathway amino-acid biosynthesis; L-histidine biosynthesis; L-histidine from 5-phospho-alpha-D-ribose 1-diphosphate: step 1/9. In terms of biological role, required for the first step of histidine biosynthesis. May allow the feedback regulation of ATP phosphoribosyltransferase activity by histidine. The sequence is that of ATP phosphoribosyltransferase regulatory subunit from Janthinobacterium sp. (strain Marseille) (Minibacterium massiliensis).